The sequence spans 67 residues: Protein AaeX (67 aa).

Transmembrane regions (helical) follow at residues 3 to 23 (VLPVVVVFGMSFPPIFIEIIV) and 43 to 63 (LVWHPALFNTALYCCLFYVVS).

The protein belongs to the AaeX family.

The protein localises to the cell membrane. The protein is Protein AaeX of Erwinia tasmaniensis (strain DSM 17950 / CFBP 7177 / CIP 109463 / NCPPB 4357 / Et1/99).